Here is a 459-residue protein sequence, read N- to C-terminus: Cysteine--tRNA ligase (459 aa).

C28 is a Zn(2+) binding site. The short motif at 30-40 (VTVYDLCHFGH) is the 'HIGH' region element. Zn(2+) contacts are provided by C209, H234, and E238. Residues 266–270 (KMSKS) carry the 'KMSKS' region motif. K269 contributes to the ATP binding site.

Belongs to the class-I aminoacyl-tRNA synthetase family. Monomer. Zn(2+) serves as cofactor.

The protein resides in the cytoplasm. The enzyme catalyses tRNA(Cys) + L-cysteine + ATP = L-cysteinyl-tRNA(Cys) + AMP + diphosphate. The chain is Cysteine--tRNA ligase from Actinobacillus pleuropneumoniae serotype 5b (strain L20).